The primary structure comprises 69 residues: DNA-directed RNA polymerase subunit omega (69 aa).

Belongs to the RNA polymerase subunit omega family. In terms of assembly, the RNAP catalytic core consists of 2 alpha, 1 beta, 1 beta' and 1 omega subunit. When a sigma factor is associated with the core the holoenzyme is formed, which can initiate transcription.

It carries out the reaction RNA(n) + a ribonucleoside 5'-triphosphate = RNA(n+1) + diphosphate. Functionally, promotes RNA polymerase assembly. Latches the N- and C-terminal regions of the beta' subunit thereby facilitating its interaction with the beta and alpha subunits. The sequence is that of DNA-directed RNA polymerase subunit omega from Pediococcus pentosaceus (strain ATCC 25745 / CCUG 21536 / LMG 10740 / 183-1w).